Consider the following 415-residue polypeptide: Glutamyl-tRNA reductase (415 aa).

Residues 49–52 (TCNR), S104, 109–111 (EPQ), and Q115 each bind substrate. The active-site Nucleophile is the C50. NADP(+) is bound at residue 184 to 189 (GAGEMI).

The protein belongs to the glutamyl-tRNA reductase family. Homodimer.

The catalysed reaction is (S)-4-amino-5-oxopentanoate + tRNA(Glu) + NADP(+) = L-glutamyl-tRNA(Glu) + NADPH + H(+). It functions in the pathway porphyrin-containing compound metabolism; protoporphyrin-IX biosynthesis; 5-aminolevulinate from L-glutamyl-tRNA(Glu): step 1/2. In terms of biological role, catalyzes the NADPH-dependent reduction of glutamyl-tRNA(Glu) to glutamate 1-semialdehyde (GSA). In Neisseria meningitidis serogroup C / serotype 2a (strain ATCC 700532 / DSM 15464 / FAM18), this protein is Glutamyl-tRNA reductase.